The following is a 1238-amino-acid chain: MKPAARETRTPPRSPGLRWALLPLLLLLRQGQVLCAGAAPNPIFDIEAVVSPTSVLLTWKHNDSGASECRIENKMESNLTFPVKNQTSCNITGLSPGTSYTFSIISVTTNETLNKTITTEPWPVSDLHVTSVGVTQARLTWSNANGTASYRMLIEELTTHSSVNISGLKPGTNNSFAFPESNETQADFAVAEEVPDANGTKRIPVTNLSQLHKNSLVSVDPPSGQDPSLTEILLTDLKPDTQYNATIYSQAANGTEGQPRNKVFKTNSTQVSDVRAMNISASSMTLTWKSNYDGSRTSIVYKIHVAGGTHSVNQTVNKTEAIILGLSSSTLYNITVHPFLGQTEGTPGFLQVYTSPDQVSDFRVTNVSTRAIGLAWRSNDSKSFEIFIKQDGGEKHRNASTGNQSYMVEDLKPGTSYHFEIIPRGPDGTEGLSSTVNGSTDPSAVTDIRVVNISTTEMQLEWQNTDDASGYTYHLVLESKSGSIIRTNSSQKWITVGSLTPGTLYNVTIFPEVDQIQGISNSITQYTRPSSVSHIEVNTTTTTAAIRWKNEDAASASYAYSVLILKTGDGSNVTSNFTKDPSILIPELIPGVSYTVKILTQVGDGTTSLVPGWNLFCTEPEPVTSFHCEVVPKEPALVLKWACPFGMYTGFELGVRSDSWDNMTRLENCTSDDDTECRTEVAYLNFSTSYNISIATLSCGKMALPAQNICTTGITDPPTPDGSPNITSVSHNSVKVKFSGFEASHGPIKAYAVILTTGEAAQPSADVLKYTYEDFKRGASDTYVTYLIRIEEKGQSQGLSEVLNYEIDVGNQSTTLGYYNGRLEPLGSYRACVAGFTNITYNLQNDGLINGDESYVSFSPYSEAVFLPQDPGVICGAVFGCIFGALAITAVGGFIFWRKKRTDAKNNEVSFSQIKPKKSKLIRVENFEAYFKKQQADSNCGFAEEYEDLKLIGISLPKYTAEIAENRGKNRYNNVLPYDISRVKLSVQTHSTDDYINANYMPGYHSKKDFIATQGPLPNTLKDFWRMVWEKNVYAIVMLTKCVEQGRTKCEEYWPSKQAQDYGDITVAMTSEVVLPEWTIRDFVVKNMQNSESHPLRQFHFTSWPDHGVPDTTDLLINFRYLVRDYMKQIPPESPILVHCSAGVGRTGTFIAIDRLIYQIENENTVDVYGIVYDLRMHRPLMVQTEDQYVFLNQCVLDIIRAQKDSKVDLIYQNTTAMTIYENLEPVSMFGKTNGYIA.

The N-terminal stretch at 1–28 (MKPAARETRTPPRSPGLRWALLPLLLLL) is a signal peptide. The Extracellular portion of the chain corresponds to 29–876 (RQGQVLCAGA…LPQDPGVICG (848 aa)). Residues 39–122 (APNPIFDIEA…LNKTITTEPW (84 aa)) enclose the Fibronectin type-III 1 domain. Residues asparagine 62, asparagine 78, asparagine 85, asparagine 90, asparagine 110, asparagine 114, asparagine 145, asparagine 164, asparagine 173, asparagine 182, asparagine 198, asparagine 207, asparagine 244, asparagine 253, asparagine 267, asparagine 278, asparagine 313, asparagine 317, asparagine 333, asparagine 366, asparagine 379, asparagine 398, asparagine 403, asparagine 437, asparagine 452, asparagine 488, asparagine 506, asparagine 538, asparagine 572, asparagine 576, asparagine 662, asparagine 668, asparagine 685, asparagine 691, asparagine 725, asparagine 811, and asparagine 838 are each glycosylated (N-linked (GlcNAc...) asparagine). The 97-residue stretch at 170-266 (PGTNNSFAFP…GQPRNKVFKT (97 aa)) folds into the Fibronectin type-III 2 domain. Fibronectin type-III domains follow at residues 270-358 (QVSD…SPDQ), 359-443 (VSDF…TDPS), 444-527 (AVTD…TQYT), 528-621 (RPSS…TEPE), 622-718 (PVTS…TDPP), and 717-803 (PPTP…SEVL). The chain crosses the membrane as a helical span at residues 877–897 (AVFGCIFGALAITAVGGFIFW). The Cytoplasmic portion of the chain corresponds to 898 to 1238 (RKKRTDAKNN…MFGKTNGYIA (341 aa)). Serine 910 carries the phosphoserine modification. The 258-residue stretch at 942–1199 (FAEEYEDLKL…VFLNQCVLDI (258 aa)) folds into the Tyrosine-protein phosphatase domain. Residues aspartate 1106, 1140–1146 (CSAGVGR), and glutamine 1184 contribute to the substrate site. The active-site Phosphocysteine intermediate is the cysteine 1140.

The protein belongs to the protein-tyrosine phosphatase family. Receptor class 3 subfamily. Monomer. Interacts with CTNNB1 (phosphorylated) and JUP (phosphorylated). Interacts with FLT3 (phosphorylated). Interacts with GAB1 and GRB2. In terms of tissue distribution, expressed at high levels in brain, kidney, spleen and intestine, and at lower levels in liver, lung, thymus and heart. Expressed at a high level in the myeloid cell line FDC-P2, and at a lower level in the pre-B lymphoid cell line WEHI-231 and the T hybridoma cell line HB21.7.31. Not expressed in the fibroblast cell line NIH3T3 or the erythroid cell line F5-5. Expressed in macrophages.

It is found in the cell membrane. Its subcellular location is the cell projection. The protein localises to the ruffle membrane. It localises to the cell junction. The catalysed reaction is O-phospho-L-tyrosyl-[protein] + H2O = L-tyrosyl-[protein] + phosphate. Tyrosine phosphatase which dephosphorylates or contributes to the dephosphorylation of CTNND1, FLT3, PDGFRB, MET, KDR, LYN, SRC, MAPK1, MAPK3, EGFR, TJP1, OCLN, PIK3R1 and PIK3R2. Plays a role in cell adhesion, migration, proliferation and differentiation. Has a role in megakaryocytes and platelet formation. Involved in vascular development. May be involved in the mechanism of contact inhibition of cell growth. Regulator of macrophage adhesion and spreading. Positively affects cell-matrix adhesion. Positive regulator of platelet activation and thrombosis. Negative regulator of cell proliferation. Negative regulator of PDGF-stimulated cell migration; through dephosphorylation of PDGFR. Positive regulator of endothelial cell survival, as well as of VEGF-induced SRC and AKT activation; through KDR dephosphorylation. Negative regulator of EGFR signaling pathway; through EGFR dephosphorylation. Enhances the barrier function of epithelial junctions during reassembly. Negatively regulates T-cell receptor (TCR) signaling. Upon T-cell TCR activation, it is up-regulated and excluded from the immunological synapses, while upon T-cell-antigen presenting cells (APC) disengagement, it is no longer excluded and can dephosphorylate PLCG1 and LAT to down-regulate prolongation of signaling. This chain is Receptor-type tyrosine-protein phosphatase eta (Ptprj), found in Mus musculus (Mouse).